Consider the following 199-residue polypeptide: Alkyl hydroperoxide reductase C (199 aa).

Residues 2 to 163 form the Thioredoxin domain; it reads VLVTYPAPDF…TLRMIDALHF (162 aa). Residue Cys50 is the Cysteine sulfenic acid (-SOH) intermediate of the active site.

It belongs to the peroxiredoxin family. AhpC/Prx1 subfamily. As to quaternary structure, homodimer; disulfide-linked, upon oxidation. 5 homodimers assemble to form a ring-like decamer.

Its subcellular location is the cytoplasm. The enzyme catalyses a hydroperoxide + NADH + H(+) = an alcohol + NAD(+) + H2O. In terms of biological role, thiol-specific peroxidase that catalyzes the reduction of hydrogen peroxide and organic hydroperoxides to water and alcohols, respectively. Plays a role in cell protection against oxidative stress by detoxifying peroxides. The chain is Alkyl hydroperoxide reductase C from Buchnera aphidicola subsp. Baizongia pistaciae (strain Bp).